Consider the following 355-residue polypeptide: Protein MxiC (355 aa).

The protein localises to the secreted. The protein resides in the host cell. Its function is as follows. Necessary for the secretion of IPA invasins. This Shigella flexneri protein is Protein MxiC (mxiC).